The sequence spans 256 residues: MLRRIHDKKPLIHHLTNTVTINDCANMTLALGGSPVMAEDLLEVEEMVGLADAVVINTGTINPDMRKAQLLAGKTANRLGKPVILDPVGAGATTLRTDFMKQLMEEITFTVIKGNASEIKTLLGQAARTKGVDVAEGESLDLQSVHAFASQTKQVIVVTGPVDFVTDGVRQHHLDVGTKRLGQVTGTGCMTASLIATFLGAGYGRFDAAVFGTYAMGKAGETAGNRPGIGSFRTGLFDAVSLMTEESLPEVQMNGQ.

Methionine 37 provides a ligand contact to substrate. Lysine 113 and threonine 159 together coordinate ATP. Glycine 186 provides a ligand contact to substrate.

This sequence belongs to the Thz kinase family. Mg(2+) is required as a cofactor.

The enzyme catalyses 5-(2-hydroxyethyl)-4-methylthiazole + ATP = 4-methyl-5-(2-phosphooxyethyl)-thiazole + ADP + H(+). The protein operates within cofactor biosynthesis; thiamine diphosphate biosynthesis; 4-methyl-5-(2-phosphoethyl)-thiazole from 5-(2-hydroxyethyl)-4-methylthiazole: step 1/1. Catalyzes the phosphorylation of the hydroxyl group of 4-methyl-5-beta-hydroxyethylthiazole (THZ). This chain is Hydroxyethylthiazole kinase, found in Exiguobacterium sibiricum (strain DSM 17290 / CCUG 55495 / CIP 109462 / JCM 13490 / 255-15).